The primary structure comprises 557 residues: Leucine-rich glioma-inactivated protein 1 (557 aa).

The N-terminal stretch at 1–34 is a signal peptide; sequence MESESIRRMGNACIPLKRIAYFLCLFSVVLLTEG. In terms of domain architecture, LRRNT spans 35–72; it reads KKPAKPKCPAVCTCSKDNALCENARSIPRTVPPDVISL. 3 LRR repeats span residues 92 to 113, 116 to 137, and 140 to 161; these read SLQL…AFIG, HLEY…TFRG, and SLIH…IFKG. The LRRCT domain maps to 173-223; the sequence is NSFNCDCKLKWLVEWLGHTNATVEDIYCEGPPEYKKRKINSLSPKDFDCII. Asparagine 192 carries an N-linked (GlcNAc...) asparagine glycan. EAR repeat units lie at residues 225-267, 271-313, 317-364, 366-415, 419-462, 464-506, and 510-552; these read EFAK…EWDH, TFRN…KRDG, KFIK…KWNG, GFYS…QWSK, LFIN…KWGG, SFQD…NWDA, and KFVK…KHVI. Asparagine 277 is a glycosylation site (N-linked (GlcNAc...) asparagine). Residue asparagine 422 is glycosylated (N-linked (GlcNAc...) asparagine).

Oligomer. Interacts with KCNA1 within a complex containing KCNA1, KCNA4 and KCNAB1. Can bind to ADAM11 and ADAM23. Part of a complex containing ADAM22, DLG4/PSD95 and CACNG2 (stargazin). In terms of processing, glycosylated. Expressed in brain. High levels found in hippocampus, thalamic nuclei, neocortex, and molecular and granule cell layers of the cerebellum.

The protein resides in the secreted. Its subcellular location is the synapse. The protein localises to the cytoplasm. Plays a role in suppressing the production of MMP1/3 through the phosphatidylinositol 3-kinase/ERK pathway. Regulates voltage-gated potassium channels assembled from KCNA1, KCNA4 and KCNAB1. It slows down channel inactivation by precluding channel closure mediated by the KCNAB1 subunit. Ligand for ADAM22 that positively regulates synaptic transmission mediated by AMPA-type glutamate receptors. The chain is Leucine-rich glioma-inactivated protein 1 (Lgi1) from Rattus norvegicus (Rat).